A 243-amino-acid polypeptide reads, in one-letter code: Pyridoxine 5'-phosphate synthase (243 aa).

A 3-amino-2-oxopropyl phosphate-binding site is contributed by N9. Residue 11–12 participates in 1-deoxy-D-xylulose 5-phosphate binding; sequence DH. Position 20 (R20) interacts with 3-amino-2-oxopropyl phosphate. H45 acts as the Proton acceptor in catalysis. R47 and H52 together coordinate 1-deoxy-D-xylulose 5-phosphate. The active-site Proton acceptor is the E72. A 1-deoxy-D-xylulose 5-phosphate-binding site is contributed by T102. Catalysis depends on H193, which acts as the Proton donor. 3-amino-2-oxopropyl phosphate-binding positions include G194 and 215 to 216; that span reads GH.

This sequence belongs to the PNP synthase family. As to quaternary structure, homooctamer; tetramer of dimers.

Its subcellular location is the cytoplasm. The enzyme catalyses 3-amino-2-oxopropyl phosphate + 1-deoxy-D-xylulose 5-phosphate = pyridoxine 5'-phosphate + phosphate + 2 H2O + H(+). It functions in the pathway cofactor biosynthesis; pyridoxine 5'-phosphate biosynthesis; pyridoxine 5'-phosphate from D-erythrose 4-phosphate: step 5/5. Catalyzes the complicated ring closure reaction between the two acyclic compounds 1-deoxy-D-xylulose-5-phosphate (DXP) and 3-amino-2-oxopropyl phosphate (1-amino-acetone-3-phosphate or AAP) to form pyridoxine 5'-phosphate (PNP) and inorganic phosphate. The protein is Pyridoxine 5'-phosphate synthase of Yersinia pestis.